The sequence spans 295 residues: 3-methyl-2-oxobutanoate hydroxymethyltransferase (295 aa).

The interval Met1–Ala30 is disordered. Mg(2+) contacts are provided by Asp76 and Asp115. Residues Asp76–Ser77, Asp115, and Lys145 contribute to the 3-methyl-2-oxobutanoate site. Glu147 lines the Mg(2+) pocket. The Proton acceptor role is filled by Glu213.

It belongs to the PanB family. In terms of assembly, homodecamer; pentamer of dimers. Mg(2+) serves as cofactor.

The protein resides in the cytoplasm. It catalyses the reaction 3-methyl-2-oxobutanoate + (6R)-5,10-methylene-5,6,7,8-tetrahydrofolate + H2O = 2-dehydropantoate + (6S)-5,6,7,8-tetrahydrofolate. Its pathway is cofactor biosynthesis; (R)-pantothenate biosynthesis; (R)-pantoate from 3-methyl-2-oxobutanoate: step 1/2. Functionally, catalyzes the reversible reaction in which hydroxymethyl group from 5,10-methylenetetrahydrofolate is transferred onto alpha-ketoisovalerate to form ketopantoate. The chain is 3-methyl-2-oxobutanoate hydroxymethyltransferase from Nocardioides sp. (strain ATCC BAA-499 / JS614).